The chain runs to 539 residues: uncharacterized protein (539 aa).

ABC transporter domains follow at residues 9–276 (LEVK…EFKK) and 288–536 (IKLE…QEMF). ATP is bound by residues 41–48 (GKSGAGKS) and 325–332 (GTSGAGKT).

Belongs to the ABC transporter superfamily.

This is an uncharacterized protein from Methanocaldococcus jannaschii (strain ATCC 43067 / DSM 2661 / JAL-1 / JCM 10045 / NBRC 100440) (Methanococcus jannaschii).